Here is a 925-residue protein sequence, read N- to C-terminus: ETO1-like protein 2 (925 aa).

A BTB domain is found at 207 to 307; sequence SDISFCVGSE…ECEARLAASV (101 aa). The TPR 1 repeat unit spans residues 409-442; sequence ALSLHQMGCVLFERKDYKAAQFHFRLASSLGHVY. Residues 509-533 are a coiled coil; that stretch reads KYRAVMKFEQKQIKEAFQEIDRLIQ. 6 TPR repeats span residues 538–571, 664–697, 738–771, 773–803, 834–867, and 869–900; these read PECL…EPNY, AERL…QRSF, GQAL…KHIR, RQGL…SCSK, TYPY…RPEL, and TLHL…DPNH.

Belongs to the ETO1 family. In terms of assembly, interacts with the C-terminal domain of ACS5. Constitutively expressed in green and etiolated seedlings.

Its pathway is protein modification; protein ubiquitination. Its function is as follows. Potential regulator of the ethylene pathway, which acts by regulating the stability of 1-aminocyclopropane-1-carboxylate synthase (ACS) enzymes. May act as a substrate-specific adapter that connects ACS enzymes, such as ACS5, to ubiquitin ligase complexes, leading to proteasomal degradation of ACS enzymes. This chain is ETO1-like protein 2 (EOL2), found in Arabidopsis thaliana (Mouse-ear cress).